Here is a 100-residue protein sequence, read N- to C-terminus: MSFKKITEMMRQAERQSKQKALDFEQKLFEYSYKNAAIKIIIFGNLTIKSITIDPALIDPEDKVTLEEMITEAVNEAVGDVKAKYDQLMEEAMPQMPGLF.

This is an uncharacterized protein from Mycoplasma pneumoniae (strain ATCC 29342 / M129 / Subtype 1) (Mycoplasmoides pneumoniae).